Consider the following 270-residue polypeptide: Methylthioribulose-1-phosphate dehydratase (270 aa).

A substrate-binding site is contributed by C122. 2 residues coordinate Zn(2+): H140 and H142. E165 (proton donor/acceptor) is an active-site residue. H230 is a binding site for Zn(2+).

The protein belongs to the aldolase class II family. MtnB subfamily. It depends on Zn(2+) as a cofactor.

The protein resides in the cytoplasm. The catalysed reaction is 5-(methylsulfanyl)-D-ribulose 1-phosphate = 5-methylsulfanyl-2,3-dioxopentyl phosphate + H2O. It functions in the pathway amino-acid biosynthesis; L-methionine biosynthesis via salvage pathway; L-methionine from S-methyl-5-thio-alpha-D-ribose 1-phosphate: step 2/6. Its function is as follows. Catalyzes the dehydration of methylthioribulose-1-phosphate (MTRu-1-P) into 2,3-diketo-5-methylthiopentyl-1-phosphate (DK-MTP-1-P). This Candida albicans (strain WO-1) (Yeast) protein is Methylthioribulose-1-phosphate dehydratase.